Here is a 483-residue protein sequence, read N- to C-terminus: NADH-quinone oxidoreductase subunit N (483 aa).

13 consecutive transmembrane segments (helical) span residues 13–33, 45–65, 80–100, 111–131, 165–185, 205–225, 244–264, 276–296, 301–321, 328–348, 373–393, 407–429, and 452–472; these read PALPEILLAVGAMALLMYGVF, GALALFALVGAFLIIEPNAYV, FMKLLILLAAAAAIVMSLTFI, PVLIILATLGMFMMVSANGLI, FVLGALASGMLLYGASLIYGF, IGVIFGIVFVLAGLAFKISAV, AFFAGAPKVAAMALILRVLFV, IIVFIAIASMVLGAFAAIGQS, LMAYSSISHMGFAMVGLAAGT, VLIYLVIYVVMNAGVFCCILA, AFMMAMLMFSLAGVPPLAGFF, LYPLAVIGVLASVVGAFYYLRIV, and VLGISGVFTLFFFVYPAPLIL.

Belongs to the complex I subunit 2 family. As to quaternary structure, NDH-1 is composed of 14 different subunits. Subunits NuoA, H, J, K, L, M, N constitute the membrane sector of the complex.

The protein resides in the cell inner membrane. It carries out the reaction a quinone + NADH + 5 H(+)(in) = a quinol + NAD(+) + 4 H(+)(out). Its function is as follows. NDH-1 shuttles electrons from NADH, via FMN and iron-sulfur (Fe-S) centers, to quinones in the respiratory chain. The immediate electron acceptor for the enzyme in this species is believed to be ubiquinone. Couples the redox reaction to proton translocation (for every two electrons transferred, four hydrogen ions are translocated across the cytoplasmic membrane), and thus conserves the redox energy in a proton gradient. This is NADH-quinone oxidoreductase subunit N from Parvibaculum lavamentivorans (strain DS-1 / DSM 13023 / NCIMB 13966).